A 512-amino-acid polypeptide reads, in one-letter code: Glutamyl-tRNA(Gln) amidotransferase subunit A (512 aa).

Residues lysine 82 and serine 157 each act as charge relay system in the active site. Catalysis depends on serine 181, which acts as the Acyl-ester intermediate.

The protein belongs to the amidase family. GatA subfamily. As to quaternary structure, heterotrimer of A, B and C subunits.

The catalysed reaction is L-glutamyl-tRNA(Gln) + L-glutamine + ATP + H2O = L-glutaminyl-tRNA(Gln) + L-glutamate + ADP + phosphate + H(+). Allows the formation of correctly charged Gln-tRNA(Gln) through the transamidation of misacylated Glu-tRNA(Gln) in organisms which lack glutaminyl-tRNA synthetase. The reaction takes place in the presence of glutamine and ATP through an activated gamma-phospho-Glu-tRNA(Gln). In Bordetella pertussis (strain Tohama I / ATCC BAA-589 / NCTC 13251), this protein is Glutamyl-tRNA(Gln) amidotransferase subunit A.